Reading from the N-terminus, the 466-residue chain is Ribulose bisphosphate carboxylase large chain (466 aa).

K5 is subject to N6,N6,N6-trimethyllysine. Substrate is bound by residues N114 and T164. The active-site Proton acceptor is the K166. K168 lines the substrate pocket. 3 residues coordinate Mg(2+): K192, D194, and E195. N6-carboxylysine is present on K192. H285 acts as the Proton acceptor in catalysis. Substrate is bound by residues R286, H318, and S370.

It belongs to the RuBisCO large chain family. Type I subfamily. Heterohexadecamer of 8 large chains and 8 small chains; disulfide-linked. The disulfide link is formed within the large subunit homodimers. Mg(2+) serves as cofactor. The disulfide bond which can form in the large chain dimeric partners within the hexadecamer appears to be associated with oxidative stress and protein turnover.

Its subcellular location is the plastid. It localises to the chloroplast. It carries out the reaction 2 (2R)-3-phosphoglycerate + 2 H(+) = D-ribulose 1,5-bisphosphate + CO2 + H2O. The catalysed reaction is D-ribulose 1,5-bisphosphate + O2 = 2-phosphoglycolate + (2R)-3-phosphoglycerate + 2 H(+). Functionally, ruBisCO catalyzes two reactions: the carboxylation of D-ribulose 1,5-bisphosphate, the primary event in carbon dioxide fixation, as well as the oxidative fragmentation of the pentose substrate in the photorespiration process. Both reactions occur simultaneously and in competition at the same active site. This chain is Ribulose bisphosphate carboxylase large chain, found in Poliothyrsis sinensis (Chinese pearlbloom tree).